The chain runs to 409 residues: S-adenosylmethionine synthase (409 aa).

141–146 contacts ATP; the sequence is GQGSAD.

The protein belongs to the AdoMet synthase 2 family. It depends on Mg(2+) as a cofactor.

The enzyme catalyses L-methionine + ATP + H2O = S-adenosyl-L-methionine + phosphate + diphosphate. It participates in amino-acid biosynthesis; S-adenosyl-L-methionine biosynthesis; S-adenosyl-L-methionine from L-methionine: step 1/1. In terms of biological role, catalyzes the formation of S-adenosylmethionine from methionine and ATP. This chain is S-adenosylmethionine synthase, found in Hyperthermus butylicus (strain DSM 5456 / JCM 9403 / PLM1-5).